The primary structure comprises 321 residues: Phospho-N-acetylmuramoyl-pentapeptide-transferase (321 aa).

A run of 10 helical transmembrane segments spans residues 1-21 (MVYLLAIIALLITFILVPVLI), 50-70 (MGGLTFLISIIITSILAIIFI), 76-96 (IILLLFVTIGFGLIGFIDDYI), 112-132 (FLAQIAIAVIFFILSQVFNLT), 140-160 (IPFINFEIPLSIAYVIFIVFW), 173-193 (GLDGLATGLSIIGFVMYAIMA), 198-218 (ATSIGLFCIIMIFALLGFLPF), 225-245 (VFMGDTGSLALGGIFATISIM), 250-270 (LSLLFIGFVFVAETLSVMIQV), and 300-320 (VVTVFWTVGLITGLIGLWIGV).

It belongs to the glycosyltransferase 4 family. MraY subfamily. The cofactor is Mg(2+).

Its subcellular location is the cell membrane. The catalysed reaction is UDP-N-acetyl-alpha-D-muramoyl-L-alanyl-gamma-D-glutamyl-L-lysyl-D-alanyl-D-alanine + di-trans,octa-cis-undecaprenyl phosphate = Mur2Ac(oyl-L-Ala-gamma-D-Glu-L-Lys-D-Ala-D-Ala)-di-trans,octa-cis-undecaprenyl diphosphate + UMP. It functions in the pathway cell wall biogenesis; peptidoglycan biosynthesis. Functionally, catalyzes the initial step of the lipid cycle reactions in the biosynthesis of the cell wall peptidoglycan: transfers peptidoglycan precursor phospho-MurNAc-pentapeptide from UDP-MurNAc-pentapeptide onto the lipid carrier undecaprenyl phosphate, yielding undecaprenyl-pyrophosphoryl-MurNAc-pentapeptide, known as lipid I. In Staphylococcus saprophyticus subsp. saprophyticus (strain ATCC 15305 / DSM 20229 / NCIMB 8711 / NCTC 7292 / S-41), this protein is Phospho-N-acetylmuramoyl-pentapeptide-transferase.